The primary structure comprises 695 residues: Zinc finger SWIM domain-containing protein 3 (695 aa).

Residues 434-490 (NAPKLRRTRLPSTPPRPKKPFRICGGGDTRLPVEEVEETKADSAQSQLPQPQDQSSK) are disordered. A compositionally biased stretch (low complexity) spans 475–489 (DSAQSQLPQPQDQSS). The SWIM-type zinc-finger motif lies at 530–571 (VAVQLLENSHQVSKDGCSCSCSFQQCYHLPCRHILALLHTSQ).

In Mus musculus (Mouse), this protein is Zinc finger SWIM domain-containing protein 3 (Zswim3).